The sequence spans 319 residues: Selection and upkeep of intraepithelial T-cells protein 9 (319 aa).

Positions 1-26 are cleaved as a signal peptide; the sequence is MESSASCLPGFFMSFLLLQNTVLTQA. Residues 27-117 form the Ig-like V-type domain; it reads MRSDIKINIQ…TNQEKKRSIV (91 aa). Over 27–139 the chain is Extracellular; sequence MRSDIKINIQ…LMSNKFSCPS (113 aa). A disulfide bond links Cys-47 and Cys-101. Asn-105 carries N-linked (GlcNAc...) asparagine glycosylation. A helical membrane pass occupies residues 140–160; sequence IYLITIIFLNFLRGILVFCCL. The Cytoplasmic portion of the chain corresponds to 161 to 183; that stretch reads RRKPVCFRNLMSTVMEALYSKMG. A helical transmembrane segment spans residues 184–204; it reads VCCLLIWECLLLVLYIAFLPI. Topologically, residues 205–228 are extracellular; the sequence is YVSFRSRAFLLDDTYPLYTNWLWN. Residues 229–249 traverse the membrane as a helical segment; the sequence is ICIILTVIMVLFPGLILCLLW. At 250–319 the chain is on the cytoplasmic side; the sequence is TLNCYGQVSS…DDTASTLFIS (70 aa).

It belongs to the SKINT family. As to expression, expressed in skin, thymus and testis.

It is found in the membrane. Functionally, may act by engaging a cell surface molecule on immature T-cells in the embryonic thymus. This chain is Selection and upkeep of intraepithelial T-cells protein 9 (Skint9), found in Mus musculus (Mouse).